A 250-amino-acid polypeptide reads, in one-letter code: Small ribosomal subunit protein uS2 (250 aa).

It belongs to the universal ribosomal protein uS2 family.

The polypeptide is Small ribosomal subunit protein uS2 (Acidovorax sp. (strain JS42)).